Consider the following 326-residue polypeptide: Adenine deaminase (326 aa).

H14, H16, and H194 together coordinate Zn(2+). The active-site Proton donor is E197. Position 275 (D275) interacts with Zn(2+). Residue D276 participates in substrate binding.

This sequence belongs to the metallo-dependent hydrolases superfamily. Adenosine and AMP deaminases family. Adenine deaminase type 2 subfamily. The cofactor is Zn(2+).

The catalysed reaction is adenine + H2O + H(+) = hypoxanthine + NH4(+). Its function is as follows. Catalyzes the hydrolytic deamination of adenine to hypoxanthine. Plays an important role in the purine salvage pathway and in nitrogen catabolism. This Crocosphaera subtropica (strain ATCC 51142 / BH68) (Cyanothece sp. (strain ATCC 51142)) protein is Adenine deaminase.